Consider the following 1030-residue polypeptide: MRENYETLVSVGTAELLPLSAFLSPSEPGRAVGGGSHADEGQEPAGCGDPQGGQPRHSLHLTALVQLVKEIPEFLFGEVKGAMDSPESESRGASLDGERASPEAAAAREPCPLRGLLSCLPDGPTSQPHLATTPTDSSCSSGPTGDGVQGSPLPIKTADKPWPTRKEGPGALGGEPSPPTHSPSRRKSHRGQERGTSEAGISPGNSPLQGLINCLKEILVPGPRHPETSPSFLPPLPSLGTSRLTRADLGPGSPPWAVKTEAVSGDCPLQGLLHCLKELPEAQDRHPSPSGVGNRRLQENPGAWKRGSGGPGYLLTPPPHPDLGAGGLLSVKMENSWVQSPPGPASCQPGRQPLSPSATGDTRGVPQPSWGPEAQAASASSSPLEALEACLKGIPPNGSSPSQLPPTSCSQNPQPGDSRSQKPELQPHRSHSEEATREPVLPLGLQSCVRDGPSRPLAPRGTPTSFSSSSSTDWDLDFGSPVGNQGQHPGKGSPPGSSPLQGLENCLKEIPVPVLRPAWPCSSAADRGPRRAEPRNWTADKEGLRAEACESARLGQGRGEAPTRSLHLVSPQVFTSSCVPACHQRGFKDPGATRPGVWRWLPEGSAPKPSPLHCLESALRGILPVRPLRFACVGGPSPSPSPGSSSSFSGSEGEDPRPEPDLWKPLPQERDRLPSCKPPVPLSPCPGGTPAGSSGGSPGEDPRRTEPRYCSGLGAGTAQDPCPVSQLEKRPRVSEASRGLELGHGRPRVAAKTHERLLPQGPPELPSESPPPELPPPEAAPPVLPASSLQPPCHCGKPLQQELHSLGAALAEKLDRLATALAGLAQEVATMRTQVNRLGRRPQGPGPMGQASWMWTLPRGPRWAHGPGHRHLPYWRQKGPTRPKPKILRGQGESCRAGDLQGLSRGTARRARPLPPDAPPAEPPGLHCSSSQQLLSSTPSCHAAPPAHPLLAHTGGHQSPLPPLVPAALPLQGASPPAASADADVPTSGVAPDGIPERPKEPSSLLGGVQRALQEELWGGEHRDPRWGAH.

Disordered regions lie at residues 27 to 56 (EPGR…GQPR), 80 to 208 (KGAM…NSPL), 225 to 255 (HPET…GSPP), 281 to 505 (EAQD…GLEN), and 634 to 788 (GGPS…PASS). Ser101 bears the Phosphoserine mark. Positions 102–114 (PEAAAAREPCPLR) are enriched in low complexity. The segment covering 124 to 143 (PTSQPHLATTPTDSSCSSGP) has biased composition (polar residues). The segment covering 157-168 (TADKPWPTRKEG) has biased composition (basic and acidic residues). Phosphoserine is present on residues Ser177, Ser182, Ser184, Ser229, Ser253, and Ser355. A compositionally biased stretch (low complexity) spans 372-389 (PEAQAASASSSPLEALEA). Polar residues predominate over residues 397–418 (NGSSPSQLPPTSCSQNPQPGDS). Over residues 419–437 (RSQKPELQPHRSHSEEATR) the composition is skewed to basic and acidic residues. Composition is skewed to low complexity over residues 485-502 (QGQH…PLQG) and 642-651 (PGSSSSFSGS). A compositionally biased stretch (basic and acidic residues) spans 654–674 (EDPRPEPDLWKPLPQERDRLP). The segment covering 689–698 (TPAGSSGGSP) has biased composition (gly residues). Positions 760 to 784 (QGPPELPSESPPPELPPPEAAPPVL) are enriched in pro residues. The stretch at 799–832 (LQQELHSLGAALAEKLDRLATALAGLAQEVATMR) forms a coiled coil. Basic residues predominate over residues 870-887 (RHLPYWRQKGPTRPKPKI). The tract at residues 870 to 1030 (RHLPYWRQKG…EHRDPRWGAH (161 aa)) is disordered. A compositionally biased stretch (pro residues) spans 913–923 (PLPPDAPPAEP). Composition is skewed to low complexity over residues 929–953 (SSSQ…LLAH) and 966–984 (PAAL…ADAD). Positions 1019–1030 (GGEHRDPRWGAH) are enriched in basic and acidic residues.

Expressed in brain (cerebellum).

This chain is Protein KRBA1 (KRBA1), found in Homo sapiens (Human).